A 104-amino-acid polypeptide reads, in one-letter code: Putative zinc finger protein ORF104b (104 aa).

The C2H2-type zinc finger occupies 62-85; it reads YECKYCHTRYLSHTGIVYHLEREH.

The protein is Putative zinc finger protein ORF104b of Acidianus sp. F28 (AFV-2).